A 165-amino-acid polypeptide reads, in one-letter code: Growth arrest and DNA damage-inducible protein GADD45 alpha (165 aa).

At threonine 2 the chain carries Phosphothreonine.

This sequence belongs to the GADD45 family. In terms of assembly, interacts with AURKA, GADD45GIP1 and PCNA. Interacts with MAPK14.

The protein resides in the nucleus. In terms of biological role, might affect PCNA interaction with some CDK (cell division protein kinase) complexes; stimulates DNA excision repair in vitro and inhibits entry of cells into S phase. In T-cells, functions as a regulator of p38 MAPKs by inhibiting p88 phosphorylation and activity. In Mus musculus (Mouse), this protein is Growth arrest and DNA damage-inducible protein GADD45 alpha (Gadd45a).